The following is a 278-amino-acid chain: Lectin 6 (278 aa).

The first 23 residues, 1-23, serve as a signal peptide directing secretion; it reads MTLSSALIKIFITFLFLQNHVNS. N-linked (GlcNAc...) asparagine glycosylation is found at Asn-116, Asn-139, and Asn-271.

It belongs to the leguminous lectin family.

May be involved in arbuscular mycorrhizal (AM) symbiosis with AM fungi. This is Lectin 6 from Medicago truncatula (Barrel medic).